Consider the following 522-residue polypeptide: MLFSMVMFTERWWVGSKDCPRVPALENSNNPWRLERTATAAELSQYGNPTTCEIDNGGVIVADGFQASKGYTGDSIVDYNDAHYKTSVDQDAWGFVRAAYNRGRNTNRQSSGPHPLCTRKCIAWLLMGRLMNAVLTQSDNPALVPNQNATGSNSRPWKPLGKAQSYSNEELNNAPQFNPETLYASDTLIRFNGVNYISQSKEQKVSPSDSNPWRVFVDWTGTKERVGTPKKAWPKHVYAPYVDFTLNTIPDLRALAKNHNVNHFTLAFVVSKDANTTCGTAYGMQNYAQYSKIKALREAGGDVMLSIGGANNAPLAASCKNVDDLMQHYYDIVDNLNLKVLDFDIEGTWVAVQASIERRNLAVKKVQDKWKSEGKDIAIWYTLPILPTGLTPEGMNVLSDAKAKGVELAGVNVMTMDYGNAICQSANTEGQNIHGKCATSAIAFLHSQLKGLHPNKSDAEIDAMMGTTPMVGVNDVQGEVFYLSDARLVMQDAQKRNLGMVGIWSIARDLPAALTCLRNSTA.

Residues 1–24 (MLFSMVMFTERWWVGSKDCPRVPA) form the signal peptide. N-linked (GlcNAc...) asparagine glycosylation is found at N148 and N275. In terms of domain architecture, GH18 spans 235 to 522 (KHVYAPYVDF…ALTCLRNSTA (288 aa)). E346 (proton donor) is an active-site residue. Residues N455 and N519 are each glycosylated (N-linked (GlcNAc...) asparagine).

Belongs to the glycosyl hydrolase 18 family. Chitinase class V subfamily.

The protein localises to the secreted. The catalysed reaction is Random endo-hydrolysis of N-acetyl-beta-D-glucosaminide (1-&gt;4)-beta-linkages in chitin and chitodextrins.. Its function is as follows. Secreted chitinase involved in the degradation of chitin, a component of the cell walls of fungi and exoskeletal elements of some animals (including worms and arthropods). Participates in the infection process and directly acts in the penetration process of the host cuticle. The chain is Endochitinase 11 (chi11) from Metarhizium anisopliae (Entomophthora anisopliae).